The sequence spans 157 residues: Ribosomal RNA large subunit methyltransferase H (157 aa).

S-adenosyl-L-methionine contacts are provided by residues Leu73, Gly105, and 124 to 129 (LSRMTF).

Belongs to the RNA methyltransferase RlmH family. In terms of assembly, homodimer.

The protein resides in the cytoplasm. The enzyme catalyses pseudouridine(1915) in 23S rRNA + S-adenosyl-L-methionine = N(3)-methylpseudouridine(1915) in 23S rRNA + S-adenosyl-L-homocysteine + H(+). In terms of biological role, specifically methylates the pseudouridine at position 1915 (m3Psi1915) in 23S rRNA. The protein is Ribosomal RNA large subunit methyltransferase H of Porphyromonas gingivalis (strain ATCC 33277 / DSM 20709 / CIP 103683 / JCM 12257 / NCTC 11834 / 2561).